The chain runs to 456 residues: Adenylyltransferase and sulfurtransferase uba4 (456 aa).

Residues Gly-101, Asp-122, 129–133, Lys-146, and 161–162 each bind ATP; these read SNLHR and DH. The Zn(2+) site is built by Cys-210 and Cys-213. The active-site Glycyl thioester intermediate; for adenylyltransferase activity is Cys-227. The Zn(2+) site is built by Cys-300 and Cys-303. Residues 350–454 enclose the Rhodanese domain; sequence KEKEHLLIDV…WKEQVDGSWP (105 aa). Cys-409 serves as the catalytic Cysteine persulfide intermediate; for sulfurtransferase activity.

This sequence in the N-terminal section; belongs to the HesA/MoeB/ThiF family. UBA4 subfamily. It depends on Zn(2+) as a cofactor.

It is found in the cytoplasm. Its subcellular location is the cytosol. The catalysed reaction is [molybdopterin-synthase sulfur-carrier protein]-C-terminal Gly-Gly + ATP + H(+) = [molybdopterin-synthase sulfur-carrier protein]-C-terminal Gly-Gly-AMP + diphosphate. It catalyses the reaction [molybdopterin-synthase sulfur-carrier protein]-C-terminal Gly-Gly-AMP + S-sulfanyl-L-cysteinyl-[cysteine desulfurase] + AH2 = [molybdopterin-synthase sulfur-carrier protein]-C-terminal-Gly-aminoethanethioate + L-cysteinyl-[cysteine desulfurase] + A + AMP + 2 H(+). Its pathway is tRNA modification; 5-methoxycarbonylmethyl-2-thiouridine-tRNA biosynthesis. In terms of biological role, plays a central role in 2-thiolation of mcm(5)S(2)U at tRNA wobble positions of cytosolic tRNA(Lys), tRNA(Glu) and tRNA(Gln). Also essential during biosynthesis of the molybdenum cofactor. Acts by mediating the C-terminal thiocarboxylation of sulfur carriers urm1 and mocs2a. Its N-terminus first activates urm1 and mocs2a as acyl-adenylates (-COAMP), then the persulfide sulfur on the catalytic cysteine is transferred to urm1 and mocs2a to form thiocarboxylation (-COSH) of their C-terminus. The reaction probably involves hydrogen sulfide that is generated from the persulfide intermediate and that acts as a nucleophile towards urm1 and mocs2a. Subsequently, a transient disulfide bond is formed. Does not use thiosulfate as sulfur donor; nfs1 probably acting as a sulfur donor for thiocarboxylation reactions. The sequence is that of Adenylyltransferase and sulfurtransferase uba4 from Sclerotinia sclerotiorum (strain ATCC 18683 / 1980 / Ss-1) (White mold).